Reading from the N-terminus, the 331-residue chain is Adenosine deaminase (331 aa).

Residues His12 and His14 each contribute to the Zn(2+) site. Substrate is bound by residues His14, Asp16, and Gly170. His197 serves as a coordination point for Zn(2+). The Proton donor role is filled by Glu200. Asp278 lines the Zn(2+) pocket. Residue Asp279 participates in substrate binding.

The protein belongs to the metallo-dependent hydrolases superfamily. Adenosine and AMP deaminases family. Adenosine deaminase subfamily. Requires Zn(2+) as cofactor.

The catalysed reaction is adenosine + H2O + H(+) = inosine + NH4(+). It catalyses the reaction 2'-deoxyadenosine + H2O + H(+) = 2'-deoxyinosine + NH4(+). Catalyzes the hydrolytic deamination of adenosine and 2-deoxyadenosine. The protein is Adenosine deaminase of Shewanella baltica (strain OS223).